Reading from the N-terminus, the 3075-residue chain is Probable polyketide synthase 30 (3075 aa).

One can recognise a Ketosynthase family 3 (KS3) domain in the interval 26–458 (SGDVAVIGIG…GSNVCLILSE (433 aa)). Catalysis depends on for beta-ketoacyl synthase activity residues Cys198, His337, and His381. Residues 663–696 (GVSADIIIGHSLGEVSSPYCSGMIDFQTLCYLTY) form an acyl/malonyl transferase region. Ser673 functions as the For acyl/malonyl transferase activity in the catalytic mechanism. Residues 963 to 1085 (GPSINNLGNN…GNFSLTKHNS (123 aa)) are N-terminal hotdog fold. Residues 963-1269 (GPSINNLGNN…CALVSLGSNP (307 aa)) form the PKS/mFAS DH domain. Catalysis depends on His997, which acts as the Proton acceptor; for dehydratase activity. The interval 1102–1269 (NFTSMSKQDF…CALVSLGSNP (168 aa)) is C-terminal hotdog fold. The active-site Proton donor; for dehydratase activity is the Asp1174. A Carrier domain is found at 2533–2610 (DNNEIIRSTI…QSIEIIKSAH (78 aa)). Ser2570 carries the post-translational modification O-(pantetheine 4'-phosphoryl)serine.

Pantetheine 4'-phosphate is required as a cofactor.

In terms of biological role, probable polyketide synthase. May be involved in the process of cell migration. The polypeptide is Probable polyketide synthase 30 (pks30) (Dictyostelium discoideum (Social amoeba)).